The sequence spans 316 residues: Ribosomal RNA small subunit methyltransferase H (316 aa).

S-adenosyl-L-methionine contacts are provided by residues 36–38, Asp-56, Phe-83, Asp-104, and Gln-111; that span reads GGH.

The protein belongs to the methyltransferase superfamily. RsmH family.

Its subcellular location is the cytoplasm. The enzyme catalyses cytidine(1402) in 16S rRNA + S-adenosyl-L-methionine = N(4)-methylcytidine(1402) in 16S rRNA + S-adenosyl-L-homocysteine + H(+). Its function is as follows. Specifically methylates the N4 position of cytidine in position 1402 (C1402) of 16S rRNA. The protein is Ribosomal RNA small subunit methyltransferase H of Protochlamydia amoebophila (strain UWE25).